We begin with the raw amino-acid sequence, 299 residues long: GTPase Era (299 aa).

An Era-type G domain is found at 5–175 (RSGFVCFVGR…TDVLAGKLPP (171 aa)). Positions 13–20 (GRPNTGKS) are G1. Residue 13 to 20 (GRPNTGKS) participates in GTP binding. The tract at residues 39 to 43 (QTTRH) is G2. A G3 region spans residues 60–63 (DTPG). Residues 60–64 (DTPGL) and 124–127 (TKID) each bind GTP. Residues 124–127 (TKID) form a G4 region. The G5 stretch occupies residues 154-156 (VSA). Residues 206-285 (VRDELPHSLA…YLDLRVKIAK (80 aa)) enclose the KH type-2 domain.

This sequence belongs to the TRAFAC class TrmE-Era-EngA-EngB-Septin-like GTPase superfamily. Era GTPase family. Monomer.

It localises to the cell envelope. The protein resides in the secreted. It is found in the cell wall. Its function is as follows. Exhibits GTPase activity. Binds RNA but is probably not involved in ribosome assembly in mycobacteria. The chain is GTPase Era from Mycobacterium sp. (strain JLS).